The chain runs to 31 residues: MPTITSYFGFLLVALTITSALFIGLSKIRLI.

The chain crosses the membrane as a helical span at residues 4 to 24 (ITSYFGFLLVALTITSALFIG).

The protein belongs to the PetL family. As to quaternary structure, the 4 large subunits of the cytochrome b6-f complex are cytochrome b6, subunit IV (17 kDa polypeptide, PetD), cytochrome f and the Rieske protein, while the 4 small subunits are PetG, PetL, PetM and PetN. The complex functions as a dimer.

It localises to the plastid. The protein resides in the chloroplast thylakoid membrane. Its function is as follows. Component of the cytochrome b6-f complex, which mediates electron transfer between photosystem II (PSII) and photosystem I (PSI), cyclic electron flow around PSI, and state transitions. PetL is important for photoautotrophic growth as well as for electron transfer efficiency and stability of the cytochrome b6-f complex. This Panax ginseng (Korean ginseng) protein is Cytochrome b6-f complex subunit 6.